Here is an 873-residue protein sequence, read N- to C-terminus: MAAPSSNYQLYGLKIGFPPGGLMRNKQMKFNDYGITVKEAIQIITNKQGMQNPDSYTLQITYSDEPSSINTSSGNIGSNNNSSSNTPLTGSLGMGPPPPSASIGGGGGGGDNGITNSGNIGSSSNSDLKKSTSSGIVNVNNSSNAPTRRLKWMDDNEKLISYPLGAHDVVIELKKKYQLIKVYDGKQTMNLIVDITKPLSDLMDLVSCKFKLRSTSDCKLFTYGKEINLNSNIKNLNIDTSLPFILRDNNDPNSLSLESIQWDNGNGFFVGGNGGIGGIGSDDDADDINNNLSVPAKSIINPVREGYLKKQDKKKSWKTRYFKLTDKYLYWYKSPTAIKASGMIICKDYHIKLAPSTHSKEVKLEFTPKHMIAGATTIIHYIKFENEQELKQWTVLPIVIESSNDSGSNNSNTSGGNQSMIGKKVFGVPIEKTVSGNNEIPAVVLQTIDYIEKKAMDIVGIFRLSGSVLTIEQWKAKYDKGEKVDLFQEVDPHAVAGLLKLYLRELPDPLLTYEKYDNFIAAQSIDDFPSRIKLIKHLVKSLPPVNYAVLSYLMAFVGKVATHSAANKMQVHNLSTVFGPNLIKDRQDSGDYGNNVQVLVEDTPIINALALSLIRDYQYIFTDKEIPEQKILAKSLYEYAGNDDGTTSEDDKDLLFPKGATIKVTQQGTDGWWTGEYQGKQGKFPASYVELLPHSPSTLLRTKSNSNLTKKKKFMLEMESTKTKNQEIDKNIKQLEITKKELESTINDLENEKAALENDPTIKAMMNLLANAKTNKDIAMIPKNIDVLFQKFEEYKSSHEALATTKTTLIDEYEQFNNNPKKRLDTKEKEQIQQKYDNLSIIIDKSQKIRSKSINSKKIINDDLVELKKIFSL.

A disordered region spans residues 64-147 (DEPSSINTSS…NVNNSSNAPT (84 aa)). Positions 66-91 (PSSINTSSGNIGSNNNSSSNTPLTGS) are enriched in low complexity. The span at 103-112 (IGGGGGGGDN) shows a compositional bias: gly residues. Over residues 113–144 (GITNSGNIGSSSNSDLKKSTSSGIVNVNNSSN) the composition is skewed to low complexity. Residues 301 to 402 (NPVREGYLKK…WTVLPIVIES (102 aa)) enclose the PH domain. The Rho-GAP domain maps to 428-621 (VPIEKTVSGN…SLIRDYQYIF (194 aa)). In terms of domain architecture, SH3 spans 628 to 694 (EQKILAKSLY…PASYVELLPH (67 aa)). The stretch at 715–761 (MLEMESTKTKNQEIDKNIKQLEITKKELESTINDLENEKAALENDPT) forms a coiled coil.

The protein localises to the cytoplasm. Functionally, rho GTPase-activating protein involved in the signal transduction pathway. This is Rho GTPase-activating protein gacJJ (gacJJ) from Dictyostelium discoideum (Social amoeba).